The primary structure comprises 191 residues: Neuronal calcium sensor 1 (191 aa).

G2 carries N-myristoyl glycine lipidation. EF-hand domains follow at residues 24 to 59 (EAEIKQWHKGFRKDCPDGKLTLEGFTKIYQQFFPFG), 60 to 95 (DPSKFANFVFNVFDENKDGFISFGEFLQALSVTSRG), 96 to 131 (TVEEKLKWAFRLYDLDNDGFITRDELLDIVDAIYRM), and 144 to 179 (TPEKRVNRIFQVMDKNKDDKLTFDEFLEGSKEDPTI). Ca(2+) contacts are provided by D73, N75, D77, E84, D109, D111, D113, E120, D157, N159, D161, K163, and E168.

The protein belongs to the recoverin family.

Functionally, neuronal calcium sensor, regulator of G protein-coupled receptor phosphorylation in a calcium dependent manner. Regulates neurite extension and branching by activity-dependent (Ca2+) influx in growth cones. The sequence is that of Neuronal calcium sensor 1 from Aplysia californica (California sea hare).